A 196-amino-acid chain; its full sequence is Large ribosomal subunit protein bL25 (196 aa).

This sequence belongs to the bacterial ribosomal protein bL25 family. CTC subfamily. In terms of assembly, part of the 50S ribosomal subunit; part of the 5S rRNA/L5/L18/L25 subcomplex. Contacts the 5S rRNA. Binds to the 5S rRNA independently of L5 and L18.

In terms of biological role, this is one of the proteins that binds to the 5S RNA in the ribosome where it forms part of the central protuberance. The protein is Large ribosomal subunit protein bL25 of Bacteroides fragilis (strain ATCC 25285 / DSM 2151 / CCUG 4856 / JCM 11019 / LMG 10263 / NCTC 9343 / Onslow / VPI 2553 / EN-2).